The primary structure comprises 373 residues: GPN-loop GTPase 1 (373 aa).

Ala2 carries the N-acetylalanine modification. 29 to 34 is a GTP binding site; sequence GSGKTT. The Gly-Pro-Asn (GPN)-loop; involved in dimer interface motif lies at 86–88; that stretch reads GPN. Residue 189–192 participates in GTP binding; it reads NKTD. Residues Ser301, Ser312, and Ser314 each carry the phosphoserine modification. Residues 304 to 373 are disordered; the sequence is LDTGTATGSS…SMAQYWKKNK (70 aa). Residue Thr328 is modified to Phosphothreonine. The segment covering 330 to 342 has biased composition (acidic residues); the sequence is DEEDEEADSDTDD. Ser338 bears the Phosphoserine mark. Thr340 carries the phosphothreonine modification. Positions 343-355 are enriched in basic and acidic residues; it reads IDHRVTEESREEP.

Belongs to the GPN-loop GTPase family. In terms of assembly, heterodimer with GPN3. Binds to RNA polymerase II (RNAPII). Interacts directly with RNAPII subunits RPB4 and RPB7 and the CTD of RPB1. Interacts with XPA.

It is found in the cytoplasm. It localises to the nucleus. In terms of biological role, small GTPase required for proper nuclear import of RNA polymerase II (RNAPII). May act at an RNAP assembly step prior to nuclear import. Forms an interface between the RNA polymerase II enzyme and chaperone/scaffolding proteins, suggesting that it is required to connect RNA polymerase II to regulators of protein complex formation. May be involved in nuclear localization of XPA. The protein is GPN-loop GTPase 1 of Bos taurus (Bovine).